We begin with the raw amino-acid sequence, 106 residues long: Large ribosomal subunit protein uL24 (106 aa).

This sequence belongs to the universal ribosomal protein uL24 family. As to quaternary structure, part of the 50S ribosomal subunit.

Functionally, one of two assembly initiator proteins, it binds directly to the 5'-end of the 23S rRNA, where it nucleates assembly of the 50S subunit. One of the proteins that surrounds the polypeptide exit tunnel on the outside of the subunit. The protein is Large ribosomal subunit protein uL24 of Desulforamulus reducens (strain ATCC BAA-1160 / DSM 100696 / MI-1) (Desulfotomaculum reducens).